We begin with the raw amino-acid sequence, 164 residues long: Large ribosomal subunit protein bL21 (164 aa).

The disordered stretch occupies residues 105 to 164; the sequence is KAPTIGPRAKKEKKVEAAPADGEAPAKKAPAKKAAAKKAAPKAAAKKAPAKKAAPKAKSE. Residues 133 to 164 are compositionally biased toward basic residues; the sequence is APAKKAAAKKAAPKAAAKKAPAKKAAPKAKSE.

This sequence belongs to the bacterial ribosomal protein bL21 family. Part of the 50S ribosomal subunit. Contacts protein L20.

Functionally, this protein binds to 23S rRNA in the presence of protein L20. The sequence is that of Large ribosomal subunit protein bL21 from Afipia carboxidovorans (strain ATCC 49405 / DSM 1227 / KCTC 32145 / OM5) (Oligotropha carboxidovorans).